A 322-amino-acid polypeptide reads, in one-letter code: 8-oxo-(d)GTP phosphatase (322 aa).

A disordered region spans residues 1 to 21 (MMPVDDLQEIPLSKDTTEKSK). A Nudix hydrolase domain is found at 22 to 156 (HTVRAAGAVL…DDRKVLRRFV (135 aa)). Residues 55–58 (RPRY), Asp60, and 65–67 (KGK) each bind substrate. Positions 65, 81, and 85 each coordinate Mg(2+). The Nudix box motif lies at 66 to 87 (GKLDQGETEPVAAAREIHEETG). Substrate is bound by residues Tyr101, Lys108, Glu127, and Tyr145. Glu127 provides a ligand contact to Mg(2+).

Belongs to the Nudix hydrolase family. Forms head-to-tail homodimers. Mg(2+) is required as a cofactor.

The enzyme catalyses 8-oxo-dGTP + H2O = 8-oxo-dGDP + phosphate + H(+). The catalysed reaction is 8-oxo-GTP + H2O = 8-oxo-GDP + phosphate + H(+). It carries out the reaction 8-oxo-dGDP + H2O = 8-oxo-dGMP + phosphate + H(+). It catalyses the reaction 8-oxo-GDP + H2O = 8-oxo-GMP + phosphate + H(+). The enzyme catalyses P(1),P(6)-bis(5'-adenosyl) hexaphosphate + H2O = 2 ATP + 2 H(+). The catalysed reaction is P(1),P(5)-bis(5'-adenosyl) pentaphosphate + H2O = ADP + ATP + 2 H(+). It carries out the reaction P(1),P(4)-bis(5'-adenosyl) tetraphosphate + H2O = AMP + ATP + 2 H(+). Ap4A hydrolysis is inhibited by fluoride ions. In terms of biological role, catalyzes the conversion of 8-oxo-dGTP to 8-oxo-dGDP, and 8-oxo-GTP to 8-oxo-GDP. At high enzyme concentrations, can also catalyze the conversion of 8-oxo-dGDP to 8-oxo-dGMP, and 8-oxo-GDP to 8-oxo-GMP. In addition, catalyzes the hydrolysis of the diadenosine polyphosphates diadenosine hexaphosphate (Ap6A), diadenosine pentaphosphate (Ap5A) and diadenosine tetraphosphate (Ap4A). This is 8-oxo-(d)GTP phosphatase from Mycolicibacterium smegmatis (strain ATCC 700084 / mc(2)155) (Mycobacterium smegmatis).